Here is a 422-residue protein sequence, read N- to C-terminus: N-acylglucosamine 2-epimerase (422 aa).

The segment at 185–206 is leucine-zipper; that stretch reads LLNLVEQLGEADEELAGISAEL.

This sequence belongs to the N-acylglucosamine 2-epimerase family. Homodimer. Forms a heterodimer with renin and inhibits its activity.

It catalyses the reaction an N-acyl-D-glucosamine = an N-acyl-D-mannosamine. The protein operates within amino-sugar metabolism; N-acetylneuraminate degradation. Catalyzes the interconversion of N-acetylglucosamine to N-acetylmannosamine. Involved in the N-glycolylneuraminic acid (Neu5Gc) degradation pathway. The chain is N-acylglucosamine 2-epimerase (RENBP) from Bos taurus (Bovine).